Consider the following 129-residue polypeptide: Large ribosomal subunit protein bL12 (129 aa).

It belongs to the bacterial ribosomal protein bL12 family. As to quaternary structure, homodimer. Part of the ribosomal stalk of the 50S ribosomal subunit. Forms a multimeric L10(L12)X complex, where L10 forms an elongated spine to which 2 to 4 L12 dimers bind in a sequential fashion. Binds GTP-bound translation factors.

Functionally, forms part of the ribosomal stalk which helps the ribosome interact with GTP-bound translation factors. Is thus essential for accurate translation. The protein is Large ribosomal subunit protein bL12 of Treponema denticola (strain ATCC 35405 / DSM 14222 / CIP 103919 / JCM 8153 / KCTC 15104).